A 509-amino-acid chain; its full sequence is Circadian clock oscillator protein KaiC (509 aa).

KaiC domains lie at M1–F243 and I257–N509. ATP is bound by residues G45, T46, G47, K48, T49, S85, K220, L221, R222, T224, H226, D237, T286, G287, T288, G289, K290, and T291. T49 provides a ligand contact to Mg(2+). Mg(2+) contacts are provided by T291 and E314. Position 327 (W327) interacts with ATP. S427 bears the Phosphoserine; by autocatalysis mark. T428 bears the Phosphothreonine; by autocatalysis mark. Residues R447, K453, M454, R455, S457, H459, and K461 each contribute to the ATP site.

It belongs to the KaiC family. Homohexamer; hexamerization is dependent on ATP-binding. Component of the KaiBC complex. KaiC interacts with SasA, activating its autokinase function and leading to RpaA activation. Mg(2+) is required as a cofactor. Post-translationally, phosphorylated on serine and threonine residues by autocatalysis. Has a 4 step phosphorylation cycle; the autokinase acts first on Thr-428, then Ser-427. When Ser-427 is modified KaiC switches to an autophosphatase mode, acting first on phospho-Thr-428 then phospho-Ser-427.

It catalyses the reaction L-seryl-[protein] + ATP = O-phospho-L-seryl-[protein] + ADP + H(+). It carries out the reaction L-threonyl-[protein] + ATP = O-phospho-L-threonyl-[protein] + ADP + H(+). The enzyme catalyses ATP + H2O = ADP + phosphate + H(+). Its function is as follows. Central component of the KaiBC oscillator complex, which constitutes the main circadian regulator in cyanobacteria. Its composition changes during the circadian cycle to control KaiC phosphorylation. Autophosphorylates and has a weak ATPase activity; ATPase activity defines the circadian period. The sequence is that of Circadian clock oscillator protein KaiC from Prochlorococcus marinus subsp. pastoris (strain CCMP1986 / NIES-2087 / MED4).